An 882-amino-acid polypeptide reads, in one-letter code: Translation initiation factor IF-2 (882 aa).

The segment at 28-296 (GIRKSADDSV…LQQGFQKPAQ (269 aa)) is disordered. Polar residues predominate over residues 67–81 (STLNIPGTGGKSKSV). Basic and acidic residues predominate over residues 92 to 209 (VKRDPQEAER…RMAEENKWTD (118 aa)). A compositionally biased stretch (basic residues) spans 244–258 (GRGRNAKAARPKKGN). Residues 259-272 (KHAESKADREEARA) are compositionally biased toward basic and acidic residues. The tr-type G domain occupies 381-550 (PRAPVVTIMG…LLQAEVLELK (170 aa)). The segment at 390–397 (GHVDHGKT) is G1. 390–397 (GHVDHGKT) serves as a coordination point for GTP. Residues 415–419 (GITQH) are G2. The interval 436-439 (DTPG) is G3. Residues 436-440 (DTPGH) and 490-493 (NKID) contribute to the GTP site. A G4 region spans residues 490–493 (NKID). The interval 526 to 528 (SAK) is G5. K800 bears the N6-acetyllysine mark.

It belongs to the TRAFAC class translation factor GTPase superfamily. Classic translation factor GTPase family. IF-2 subfamily.

The protein resides in the cytoplasm. Functionally, one of the essential components for the initiation of protein synthesis. Protects formylmethionyl-tRNA from spontaneous hydrolysis and promotes its binding to the 30S ribosomal subunits. Also involved in the hydrolysis of GTP during the formation of the 70S ribosomal complex. The chain is Translation initiation factor IF-2 from Shigella boydii serotype 4 (strain Sb227).